Consider the following 632-residue polypeptide: Cytosolic Fe-S cluster assembly factor NAR1 (632 aa).

C20 serves as a coordination point for [4Fe-4S] cluster. The segment at 27–53 (LPAKPEDSSNPYEVTTEDKAAASQPPP) is disordered. [4Fe-4S] cluster contacts are provided by C62, C65, and C68. Disordered regions lie at residues 99-119 (WQTQNGTNGTNGTNGTTNGHS) and 210-231 (LSPETSNPSTKPGSEGAIDTTP). Residues 101 to 119 (TQNGTNGTNGTNGTTNGHS) show a composition bias toward low complexity. Polar residues predominate over residues 211–221 (SPETSNPSTKP). The [4Fe-4S] cluster site is built by C240, C295, C486, and C490. The interval 542–573 (GSDSEEEKVDQDGDQNMQDATTNGHTSEPDIV) is disordered. The span at 544 to 554 (DSEEEKVDQDG) shows a compositional bias: acidic residues. Residues 555 to 567 (DQNMQDATTNGHT) show a composition bias toward polar residues.

It belongs to the NARF family.

Component of the cytosolic Fe/S protein assembly machinery. Required for maturation of extramitochondrial Fe/S proteins. May play a role in the transfer of pre-assembled Fe/S clusters to target apoproteins. The polypeptide is Cytosolic Fe-S cluster assembly factor NAR1 (NAR1) (Phaeosphaeria nodorum (strain SN15 / ATCC MYA-4574 / FGSC 10173) (Glume blotch fungus)).